Reading from the N-terminus, the 531-residue chain is UDP-glucuronosyltransferase 1A3 (531 aa).

A signal peptide spans 1-25 (MGIQGFLQKLSGLLLLLCALPWAEG). Asn-116, Asn-139, Asn-293, and Asn-431 each carry an N-linked (GlcNAc...) asparagine glycan. The helical transmembrane segment at 489-505 (VIGFLLAIVLTVVFIVY) threads the bilayer.

Belongs to the UDP-glycosyltransferase family. In terms of assembly, homodimers. Homooligomer. Interacts with UGT1A1, UGT1A4, UGT1A6, UGT1A7, UGT1A8, UGT1A9 and UGT1A10 to form heterodimers.

It is found in the endoplasmic reticulum membrane. The enzyme catalyses glucuronate acceptor + UDP-alpha-D-glucuronate = acceptor beta-D-glucuronoside + UDP + H(+). It carries out the reaction 17beta-estradiol + UDP-alpha-D-glucuronate = 17beta-estradiol 3-O-(beta-D-glucuronate) + UDP + H(+). It catalyses the reaction 17beta-estradiol + UDP-alpha-D-glucuronate = 17beta-estradiol 17-O-(beta-D-glucuronate) + UDP + H(+). The catalysed reaction is 17alpha-estradiol + UDP-alpha-D-glucuronate = 17alpha-estradiol 3-O-(beta-D-glucuronate) + UDP + H(+). The enzyme catalyses estrone + UDP-alpha-D-glucuronate = estrone 3-O-(beta-D-glucuronate) + UDP + H(+). It carries out the reaction chenodeoxycholate + UDP-alpha-D-glucuronate = chenodeoxycholoyl-24-O-(beta-D-glucuronate) + UDP. It catalyses the reaction deoxycholate + UDP-alpha-D-glucuronate = deoxycholoyl-24-O-(beta-D-glucuronate) + UDP. The catalysed reaction is lithocholate + UDP-alpha-D-glucuronate = lithocholoyl-24-O-(beta-D-glucuronate) + UDP. The enzyme catalyses hyodeoxycholate + UDP-alpha-D-glucuronate = hyodeoxycholoyl-24-O-(beta-D-glucuronate) + UDP. It carries out the reaction hyocholate + UDP-alpha-D-glucuronate = hyocholoyl-24-O-(beta-D-glucuronate) + UDP. It catalyses the reaction calcidiol + UDP-alpha-D-glucuronate = calcidiol 25-O-(beta-D-glucuronide) + UDP + H(+). The catalysed reaction is losartan + UDP-alpha-D-glucuronate = losartan-2-N-beta-D-glucuronide + UDP. The enzyme catalyses candesartan + UDP-alpha-D-glucuronate = candesartan-2-N-beta-D-glucuronide + UDP. It carries out the reaction zolasartan + UDP-alpha-D-glucuronate = zolarsartan-2-N-beta-D-glucuronide + UDP. It catalyses the reaction (E)-ferulate + UDP-alpha-D-glucuronate = (E)-4-O-(beta-D-glucuronosyl)-ferulate + UDP + H(+). The catalysed reaction is (E)-ferulate + UDP-alpha-D-glucuronate = (E)-ferulic acid beta-D-glucuronate ester + UDP. UDP-glucuronosyltransferase (UGT) that catalyzes phase II biotransformation reactions in which lipophilic substrates are conjugated with glucuronic acid to increase the metabolite's water solubility, thereby facilitating excretion into either the urine or bile. Essential for the elimination and detoxification of drugs, xenobiotics and endogenous compounds. Catalyzes the glucuronidation of endogenous estrogen hormones such as estradiol and estrone. Contributes to bile acid (BA) detoxification by catalyzing the glucuronidation of BA substrates, which are natural detergents for dietary lipids absorption. Involved in the glucuronidation of calcidiol, which is the major circulating form of vitamin D3, essential for the regulation of calcium and phosphate homeostasis. Involved in the glucuronidation of the phytochemical ferulic acid at the phenolic or the carboxylic acid group. Involved in the glucuronidation of the AGTR1 angiotensin receptor antagonists losartan, candesartan and zolarsartan, which can inhibit the effect of angiotensin II. The polypeptide is UDP-glucuronosyltransferase 1A3 (Rattus norvegicus (Rat)).